Here is a 260-residue protein sequence, read N- to C-terminus: Movement protein (260 aa).

Residues 230-260 (SGDTAEEAGEASSGEPHWVPEATAPRVRKAT) form a disordered region.

In terms of biological role, transports viral genome to neighboring plant cells directly through plasmosdesmata, without any budding. The movement protein allows efficient cell to cell propagation, by bypassing the host cell wall barrier. Might act by forming tubules structures that increase the size exclusion limit (SEL) of plasmodesmata, thereby allowing viral ribonucleoproteins to spread directly to neighboring cells. Binds to ssRNA. In Groundnut rosette virus (strain MC1) (GRV), this protein is Movement protein.